Here is a 237-residue protein sequence, read N- to C-terminus: UPF0053 inner membrane protein YgdQ (237 aa).

Over M1–T17 the chain is Periplasmic. A helical membrane pass occupies residues L18 to A38. Residues K39–R50 are Cytoplasmic-facing. The chain crosses the membrane as a helical span at residues L51–T71. The Periplasmic portion of the chain corresponds to R72–T79. Residues I80–I100 form a helical membrane-spanning segment. The Cytoplasmic segment spans residues W101–S124. The helical transmembrane segment at F125–I145 threads the bilayer. At T146 to S151 the chain is on the periplasmic side. A helical membrane pass occupies residues D152 to A172. Residues R173 to K186 are Cytoplasmic-facing. Residues M187–I207 traverse the membrane as a helical segment. Over H208–V209 the chain is Periplasmic. The chain crosses the membrane as a helical span at residues P210–I230. Topologically, residues R231–L237 are cytoplasmic.

This sequence belongs to the UPF0053 family.

It is found in the cell inner membrane. The chain is UPF0053 inner membrane protein YgdQ (ygdQ) from Escherichia coli O157:H7.